The chain runs to 820 residues: Leucine--tRNA ligase (820 aa).

A 'HIGH' region motif is present at residues 42–52; that stretch reads PYPSGDLHMGH. The 'KMSKS' region signature appears at 576–580; that stretch reads KMSKS. Lys579 lines the ATP pocket.

This sequence belongs to the class-I aminoacyl-tRNA synthetase family.

It is found in the cytoplasm. It catalyses the reaction tRNA(Leu) + L-leucine + ATP = L-leucyl-tRNA(Leu) + AMP + diphosphate. The protein is Leucine--tRNA ligase of Coxiella burnetii (strain Dugway 5J108-111).